Consider the following 423-residue polypeptide: Transmembrane protease serine 11E (423 aa).

Residues 1-18 (MYRSCVVRARKRTCVEPW) are Cytoplasmic-facing. The chain crosses the membrane as a helical; Signal-anchor for type II membrane protein span at residues 19–39 (VIGIISFLSLIVLAVCIGLTV). At 40-423 (HYVRYNHRRT…RHWIASNTGI (384 aa)) the chain is on the extracellular side. The SEA domain occupies 48–166 (RTYNYYSTLS…ESVKIKKINK (119 aa)). N-linked (GlcNAc...) asparagine glycans are attached at residues Asn74, Asn165, Asn182, and Asn223. 4 disulfide bridges follow: Cys176-Cys297, Cys217-Cys233, Cys342-Cys358, and Cys369-Cys398. One can recognise a Peptidase S1 domain in the interval 192–422 (IVGGTPVEEE…FRHWIASNTG (231 aa)). Catalysis depends on charge relay system residues His232 and Asp277. Residue Ser373 is the Charge relay system of the active site.

This sequence belongs to the peptidase S1 family. As to quaternary structure, forms a heterodimer with SERPINA5 and SERPINE1. N-glycosylated. In terms of tissue distribution, expressed in epidermal, oral and male reproductive tissues.

The protein localises to the cell membrane. It localises to the secreted. Its activity is regulated as follows. Inhibited by SERPINA5. Serine protease which possesses both gelatinolytic and caseinolytic activities. Shows a preference for Arg in the P1 position. This Mus musculus (Mouse) protein is Transmembrane protease serine 11E (Tmprss11e).